The following is a 34-amino-acid chain: Photosystem II reaction center protein Psb30 (34 aa).

A helical transmembrane segment spans residues 6 to 26 (VIGQLTSLAMIVLVGPAVIVV).

The protein belongs to the Psb30/Ycf12 family. In terms of assembly, PSII is composed of 1 copy each of membrane proteins PsbA, PsbB, PsbC, PsbD, PsbE, PsbF, PsbH, PsbI, PsbJ, PsbK, PsbL, PsbM, PsbT, PsbX, PsbY, PsbZ, Psb30/Ycf12, peripheral proteins of the oxygen-evolving complex and a large number of cofactors. It forms dimeric complexes.

The protein resides in the plastid. Its subcellular location is the chloroplast thylakoid membrane. Functionally, a core subunit of photosystem II (PSII), probably helps stabilize the reaction center. This Gracilaria tenuistipitata var. liui (Red alga) protein is Photosystem II reaction center protein Psb30.